A 116-amino-acid polypeptide reads, in one-letter code: NADPH-dependent 7-cyano-7-deazaguanine reductase (116 aa).

The Thioimide intermediate role is filled by Cys31. Catalysis depends on Asp38, which acts as the Proton donor. Substrate contacts are provided by residues 53–55 (IEL) and 72–73 (YE).

This sequence belongs to the GTP cyclohydrolase I family. QueF type 1 subfamily.

It is found in the cytoplasm. The catalysed reaction is 7-aminomethyl-7-carbaguanine + 2 NADP(+) = 7-cyano-7-deazaguanine + 2 NADPH + 3 H(+). It participates in tRNA modification; tRNA-queuosine biosynthesis. In terms of biological role, catalyzes the NADPH-dependent reduction of 7-cyano-7-deazaguanine (preQ0) to 7-aminomethyl-7-deazaguanine (preQ1). This chain is NADPH-dependent 7-cyano-7-deazaguanine reductase, found in Chlorobium luteolum (strain DSM 273 / BCRC 81028 / 2530) (Pelodictyon luteolum).